A 288-amino-acid chain; its full sequence is Glycine--tRNA ligase alpha subunit (288 aa).

Belongs to the class-II aminoacyl-tRNA synthetase family. As to quaternary structure, tetramer of two alpha and two beta subunits.

The protein localises to the cytoplasm. The enzyme catalyses tRNA(Gly) + glycine + ATP = glycyl-tRNA(Gly) + AMP + diphosphate. This Rickettsia massiliae (strain Mtu5) protein is Glycine--tRNA ligase alpha subunit.